Reading from the N-terminus, the 205-residue chain is Putative 3-methyladenine DNA glycosylase (205 aa).

Belongs to the DNA glycosylase MPG family.

The protein is Putative 3-methyladenine DNA glycosylase of Bacillus cereus (strain ATCC 14579 / DSM 31 / CCUG 7414 / JCM 2152 / NBRC 15305 / NCIMB 9373 / NCTC 2599 / NRRL B-3711).